The chain runs to 363 residues: Sulfate/thiosulfate import ATP-binding protein CysA (363 aa).

In terms of domain architecture, ABC transporter spans 3 to 237; that stretch reads IEINNISKYF…PATRFVLEFL (235 aa). ATP is bound at residue 35–42; that stretch reads GPSGSGKT.

It belongs to the ABC transporter superfamily. Sulfate/tungstate importer (TC 3.A.1.6) family. As to quaternary structure, the complex is composed of two ATP-binding proteins (CysA), two transmembrane proteins (CysT and CysW) and a solute-binding protein (CysP).

It localises to the cell inner membrane. It carries out the reaction sulfate(out) + ATP + H2O = sulfate(in) + ADP + phosphate + H(+). The enzyme catalyses thiosulfate(out) + ATP + H2O = thiosulfate(in) + ADP + phosphate + H(+). Part of the ABC transporter complex CysAWTP involved in sulfate/thiosulfate import. Responsible for energy coupling to the transport system. In Yersinia pseudotuberculosis serotype I (strain IP32953), this protein is Sulfate/thiosulfate import ATP-binding protein CysA.